The primary structure comprises 262 residues: Zinc finger protein 138 (262 aa).

Residues 110–132 (FRCKECDKSLCMLSRLTQHKKIH) form a C2H2-type 1 zinc finger. Residues 138-160 (YKCEECGKTFNWSTNLSKPKKIH) form a C2H2-type 2; degenerate zinc finger. The C2H2-type 3; degenerate zinc-finger motif lies at 166–188 (YKCEVCGKAFHQSSILTKHKIIR). The C2H2-type 4 zinc finger occupies 194-216 (YKCAHCGKAFKQSSHLTRHKIIH). The segment at 222 to 244 (YKCEQCGKVFKQSPTLTKHQIIY) adopts a C2H2-type 5; degenerate zinc-finger fold. The segment at 250-262 (YKCEECGKAFNLS) adopts a C2H2-type 6; degenerate zinc-finger fold.

Belongs to the krueppel C2H2-type zinc-finger protein family.

The protein localises to the nucleus. May be involved in transcriptional regulation as a repressor. This is Zinc finger protein 138 (ZNF138) from Homo sapiens (Human).